Here is a 91-residue protein sequence, read N- to C-terminus: uncharacterized protein (91 aa).

The next 2 membrane-spanning stretches (helical) occupy residues 22 to 42 (WPVI…AFVV) and 53 to 73 (VAGL…LAAA).

It localises to the cell membrane. This is an uncharacterized protein from Mycobacterium bovis (strain ATCC BAA-935 / AF2122/97).